The following is a 249-amino-acid chain: NADH-quinone oxidoreductase subunit C (249 aa).

Residues methionine 1–serine 29 form a disordered region.

This sequence belongs to the complex I 30 kDa subunit family. NDH-1 is composed of 14 different subunits. Subunits NuoB, C, D, E, F, and G constitute the peripheral sector of the complex.

It localises to the cell membrane. The enzyme catalyses a quinone + NADH + 5 H(+)(in) = a quinol + NAD(+) + 4 H(+)(out). Its function is as follows. NDH-1 shuttles electrons from NADH, via FMN and iron-sulfur (Fe-S) centers, to quinones in the respiratory chain. The immediate electron acceptor for the enzyme in this species is believed to be a menaquinone. Couples the redox reaction to proton translocation (for every two electrons transferred, four hydrogen ions are translocated across the cytoplasmic membrane), and thus conserves the redox energy in a proton gradient. The protein is NADH-quinone oxidoreductase subunit C of Saccharopolyspora erythraea (strain ATCC 11635 / DSM 40517 / JCM 4748 / NBRC 13426 / NCIMB 8594 / NRRL 2338).